Consider the following 436-residue polypeptide: Serine/threonine-protein kinase 40 (436 aa).

Over residues 1–10 (MKRRASDRGA) the composition is skewed to basic and acidic residues. Residues 1 to 25 (MKRRASDRGAGETSARAKALGSGIS) are disordered. Residues 35 to 332 (FILGPRLGNS…DVLEALSSII (298 aa)) form the Protein kinase domain. ATP contacts are provided by residues 41-49 (LGNSPVPSI) and Lys-66. Asp-197 serves as the catalytic Proton acceptor. Residues 396 to 417 (RSWVPKRQSGAGVPPVRRLGHD) are disordered.

This sequence belongs to the protein kinase superfamily. CAMK Ser/Thr protein kinase family.

It is found in the nucleus. Its subcellular location is the cytoplasm. It carries out the reaction L-seryl-[protein] + ATP = O-phospho-L-seryl-[protein] + ADP + H(+). The enzyme catalyses L-threonyl-[protein] + ATP = O-phospho-L-threonyl-[protein] + ADP + H(+). May be a negative regulator of NF-kappa-B and p53-mediated gene transcription. The sequence is that of Serine/threonine-protein kinase 40 (STK40) from Bos taurus (Bovine).